The sequence spans 217 residues: Large ribosomal subunit protein uL3 (217 aa).

It belongs to the universal ribosomal protein uL3 family. As to quaternary structure, part of the 50S ribosomal subunit. Forms a cluster with proteins L14 and L19.

In terms of biological role, one of the primary rRNA binding proteins, it binds directly near the 3'-end of the 23S rRNA, where it nucleates assembly of the 50S subunit. This Mycolicibacterium smegmatis (strain ATCC 700084 / mc(2)155) (Mycobacterium smegmatis) protein is Large ribosomal subunit protein uL3.